Consider the following 208-residue polypeptide: Probable molybdenum cofactor guanylyltransferase (208 aa).

Residues 12 to 14 (IAG), Lys-24, Asp-72, and Asp-101 contribute to the GTP site. Asp-101 contacts Mg(2+).

It belongs to the MobA family. Mg(2+) serves as cofactor.

The protein resides in the cytoplasm. The catalysed reaction is Mo-molybdopterin + GTP + H(+) = Mo-molybdopterin guanine dinucleotide + diphosphate. Functionally, transfers a GMP moiety from GTP to Mo-molybdopterin (Mo-MPT) cofactor (Moco or molybdenum cofactor) to form Mo-molybdopterin guanine dinucleotide (Mo-MGD) cofactor. In Chloroflexus aggregans (strain MD-66 / DSM 9485), this protein is Probable molybdenum cofactor guanylyltransferase.